The chain runs to 471 residues: Ankyrin repeat and death domain-containing protein 1A (471 aa).

ANK repeat units lie at residues 19-48 (VGRV…AVDE), 52-81 (FGMN…KIHC), 85-114 (DGLT…DVAL), 120-149 (LGRT…DHSV), 153-182 (EGNT…DLEE), 186-215 (EGLT…TVNA), 219-248 (KNLS…CTNV), 251-280 (HGAS…DLNA), 284-313 (RQQT…DLNL), and 317-346 (QGKT…FYKW). Residues 379 to 467 (SVLWRLASRH…DLAELAVASV (89 aa)) form the Death domain.

The chain is Ankyrin repeat and death domain-containing protein 1A (ANKDD1A) from Macaca fascicularis (Crab-eating macaque).